Reading from the N-terminus, the 462-residue chain is Glycoprotein endo-alpha-1,2-mannosidase (462 aa).

Residues 1–8 (MAKFRRGT) lie on the Cytoplasmic side of the membrane. Residues 9-29 (CIILALFILFIFSLMMGLKML) traverse the membrane as a helical; Signal-anchor for type II membrane protein segment. Residues 30–462 (RPNTATFGAP…YALDHQLPVS (433 aa)) lie on the Lumenal side of the membrane. The interval 60–462 (DFQKSDRINS…YALDHQLPVS (403 aa)) is catalytic.

The protein belongs to the glycosyl hydrolase 99 family. In terms of processing, undergoes proteolytic cleavage in the C-terminal region.

Its subcellular location is the golgi apparatus membrane. The catalysed reaction is N-{alpha-Glc-(1-&gt;3)-alpha-Man-(1-&gt;2)-alpha-Man-(1-&gt;2)-alpha-Man-(1-&gt;3)-[alpha-Man-(1-&gt;2)-alpha-Man-(1-&gt;3)-[alpha-Man-(1-&gt;2)-alpha-Man-(1-&gt;6)]-alpha-Man-(1-&gt;6)]-beta-Man-(1-&gt;4)-beta-GlcNAc-(1-&gt;4)-beta-GlcNAc}-L-asparaginyl-[protein] + H2O = alpha-D-glucosyl-(1-&gt;3)-D-mannopyranose + N(4)-{alpha-D-Man-(1-&gt;2)-alpha-D-Man-(1-&gt;3)-[alpha-D-Man-(1-&gt;2)-alpha-D-Man-(1-&gt;3)-[alpha-D-Man-(1-&gt;2)-alpha-D-Man-(1-&gt;6)]-alpha-D-Man-(1-&gt;6)]-beta-D-Man-(1-&gt;4)-beta-D-GlaNAc-(1-&gt;4)-beta-D-GlcNAc}-L-asparaginyl-[protein] (N-glucan mannose isomer 8A1,2,3B1,2). In Pongo abelii (Sumatran orangutan), this protein is Glycoprotein endo-alpha-1,2-mannosidase (MANEA).